A 197-amino-acid polypeptide reads, in one-letter code: Methylamine utilization protein MauD (197 aa).

A helical membrane pass occupies residues phenylalanine 3–leucine 23. The 133-residue stretch at proline 48–threonine 180 folds into the Thioredoxin domain.

The protein localises to the membrane. It participates in one-carbon metabolism; methylamine degradation. In terms of biological role, may be specifically involved in the processing, transport, and/or maturation of the MADH beta-subunit. This is Methylamine utilization protein MauD (mauD) from Paracoccus versutus (Thiobacillus versutus).